Consider the following 265-residue polypeptide: MTDLTACAHLNDYAKRALSLMDLTTLNDDDTDEKVIALCHQAKSPAGNTAAICIYPRFIPVARKALREQGTPEIRIATVTNFPHGNDDVAIALAETRAAIAYGADEVDVVFPYRALMAGNDKIGFELVKTCKEACAAANVLLKVIIETGELKQAHLIRQASEIAIKAGADFIKTSTGKVPVNATLESADIMIRTIRELGVGETVGFKPAGGVRTAEDAAQFLQLADQLMGEGWADARHFRFGASSLLASLLTTLGHQSNANSSGY.

Aspartate 108 serves as the catalytic Proton donor/acceptor. Residue lysine 173 is the Schiff-base intermediate with acetaldehyde of the active site. The Proton donor/acceptor role is filled by lysine 207.

This sequence belongs to the DeoC/FbaB aldolase family. DeoC type 2 subfamily.

The protein resides in the cytoplasm. It catalyses the reaction 2-deoxy-D-ribose 5-phosphate = D-glyceraldehyde 3-phosphate + acetaldehyde. It functions in the pathway carbohydrate degradation; 2-deoxy-D-ribose 1-phosphate degradation; D-glyceraldehyde 3-phosphate and acetaldehyde from 2-deoxy-alpha-D-ribose 1-phosphate: step 2/2. Catalyzes a reversible aldol reaction between acetaldehyde and D-glyceraldehyde 3-phosphate to generate 2-deoxy-D-ribose 5-phosphate. This chain is Deoxyribose-phosphate aldolase 2 (deoC2), found in Yersinia pestis.